Consider the following 279-residue polypeptide: Thymidylate synthase 1 (279 aa).

A dUMP-binding site is contributed by Arg-141 to Arg-142. Cys-161 functions as the Nucleophile in the catalytic mechanism. Residues Arg-181–Asp-184, Asn-192, and His-222–Tyr-224 each bind dUMP. Asp-184 is a binding site for (6R)-5,10-methylene-5,6,7,8-tetrahydrofolate. Position 278 (Ala-278) interacts with (6R)-5,10-methylene-5,6,7,8-tetrahydrofolate.

The protein belongs to the thymidylate synthase family. Bacterial-type ThyA subfamily. In terms of assembly, homodimer.

It is found in the cytoplasm. It catalyses the reaction dUMP + (6R)-5,10-methylene-5,6,7,8-tetrahydrofolate = 7,8-dihydrofolate + dTMP. It participates in pyrimidine metabolism; dTTP biosynthesis. Catalyzes the reductive methylation of 2'-deoxyuridine-5'-monophosphate (dUMP) to 2'-deoxythymidine-5'-monophosphate (dTMP) while utilizing 5,10-methylenetetrahydrofolate (mTHF) as the methyl donor and reductant in the reaction, yielding dihydrofolate (DHF) as a by-product. This enzymatic reaction provides an intracellular de novo source of dTMP, an essential precursor for DNA biosynthesis. The sequence is that of Thymidylate synthase 1 from Bacillus spizizenii (strain ATCC 23059 / NRRL B-14472 / W23) (Bacillus subtilis subsp. spizizenii).